The following is a 325-amino-acid chain: Tetraacyldisaccharide 4'-kinase (325 aa).

58–65 (TVGGSGKT) provides a ligand contact to ATP.

The protein belongs to the LpxK family.

It carries out the reaction a lipid A disaccharide + ATP = a lipid IVA + ADP + H(+). The protein operates within glycolipid biosynthesis; lipid IV(A) biosynthesis; lipid IV(A) from (3R)-3-hydroxytetradecanoyl-[acyl-carrier-protein] and UDP-N-acetyl-alpha-D-glucosamine: step 6/6. Transfers the gamma-phosphate of ATP to the 4'-position of a tetraacyldisaccharide 1-phosphate intermediate (termed DS-1-P) to form tetraacyldisaccharide 1,4'-bis-phosphate (lipid IVA). The chain is Tetraacyldisaccharide 4'-kinase from Coxiella burnetii (strain CbuK_Q154) (Coxiella burnetii (strain Q154)).